A 226-amino-acid chain; its full sequence is Protein DEHYDRATION-INDUCED 19 (226 aa).

The tract at residues 158–208 (FPTSDTEETSKPPISIPDDASVIKETPAQPWDSSIDSSLTREEREQKRKQA) is disordered. Over residues 196 to 205 (LTREEREQKR) the composition is skewed to basic and acidic residues.

Belongs to the Di19 family.

The sequence is that of Protein DEHYDRATION-INDUCED 19 (DI19-1) from Oryza sativa subsp. japonica (Rice).